The primary structure comprises 246 residues: UDP-N-acetyl-D-mannosaminuronic acid transferase (246 aa).

This sequence belongs to the glycosyltransferase 26 family.

The catalysed reaction is UDP-N-acetyl-alpha-D-mannosaminouronate + N-acetyl-alpha-D-glucosaminyl-di-trans,octa-cis-undecaprenyl diphosphate = beta-D-ManNAcA-(1-&gt;4)-alpha-D-GlcNAc-di-trans,octa-cis-undecaprenyl diphosphate + UDP + H(+). Its pathway is bacterial outer membrane biogenesis; enterobacterial common antigen biosynthesis. Its function is as follows. Catalyzes the synthesis of Und-PP-GlcNAc-ManNAcA (Lipid II), the second lipid-linked intermediate involved in enterobacterial common antigen (ECA) synthesis. The chain is UDP-N-acetyl-D-mannosaminuronic acid transferase from Salmonella choleraesuis (strain SC-B67).